Consider the following 349-residue polypeptide: Fe(3+) ions import ATP-binding protein FbpC (349 aa).

An ABC transporter domain is found at leucine 4 to leucine 236. Glycine 36 to threonine 43 contributes to the ATP binding site.

It belongs to the ABC transporter superfamily. Fe(3+) ion importer (TC 3.A.1.10) family. In terms of assembly, the complex is composed of two ATP-binding proteins (FbpC), two transmembrane proteins (FbpB) and a solute-binding protein (FbpA).

The protein localises to the cell inner membrane. It carries out the reaction Fe(3+)(out) + ATP + H2O = Fe(3+)(in) + ADP + phosphate + H(+). Its function is as follows. Part of the ABC transporter complex FbpABC involved in Fe(3+) ions import. Responsible for energy coupling to the transport system. The protein is Fe(3+) ions import ATP-binding protein FbpC of Yersinia pestis bv. Antiqua (strain Antiqua).